A 444-amino-acid chain; its full sequence is Tryptophan 5-hydroxylase 1 (444 aa).

Residues 19–94 form the ACT domain; it reads TLIFSLKNEV…TVLSVDSPDQ (76 aa). Ser-58 carries the post-translational modification Phosphoserine; by PKA. Tyr-235, Arg-257, and Thr-265 together coordinate L-tryptophan. Fe cation is bound by residues His-272, His-277, and Glu-317. L-tryptophan contacts are provided by Ser-336 and Ile-366.

Belongs to the biopterin-dependent aromatic amino acid hydroxylase family. Homotetramer. Interacts with DNAJC12. Fe(2+) serves as cofactor. Post-translationally, ubiquitinated, leading to its degradation by the proteasome. Ubiquitinated is triggered by phosphorylation. Phosphorylated; triggering degradation by the proteasome.

It carries out the reaction (6R)-L-erythro-5,6,7,8-tetrahydrobiopterin + L-tryptophan + O2 = 5-hydroxy-L-tryptophan + (4aS,6R)-4a-hydroxy-L-erythro-5,6,7,8-tetrahydrobiopterin. It participates in aromatic compound metabolism; serotonin biosynthesis; serotonin from L-tryptophan: step 1/2. Functionally, oxidizes L-tryptophan to 5-hydroxy-l-tryptophan in the rate-determining step of serotonin biosynthesis. The sequence is that of Tryptophan 5-hydroxylase 1 (Tph1) from Rattus norvegicus (Rat).